Here is a 126-residue protein sequence, read N- to C-terminus: Anti-adapter protein IraD (126 aa).

It belongs to the GpW/Gp25 family. IraD subfamily. Interacts with RssB.

The protein localises to the cytoplasm. Inhibits RpoS proteolysis by regulating RssB activity, thereby increasing the stability of the sigma stress factor RpoS during oxidative stress. Its effect on RpoS stability is due to its interaction with RssB, which probably blocks the interaction of RssB with RpoS, and the consequent delivery of the RssB-RpoS complex to the ClpXP protein degradation pathway. The protein is Anti-adapter protein IraD of Salmonella paratyphi A (strain ATCC 9150 / SARB42).